We begin with the raw amino-acid sequence, 416 residues long: Enterobactin exporter EntS (416 aa).

Residues 1–21 (MNKQSWLLNLSLLKTHPAFRA) lie on the Cytoplasmic side of the membrane. A helical transmembrane segment spans residues 22-42 (VFLARFISIVSLGLLGVAVPV). Topologically, residues 43 to 55 (QIQMMTHSTWQVG) are periplasmic. Residues 56–76 (LSVTLTGGAMFVGLMVGGVLA) traverse the membrane as a helical segment. Topologically, residues 77 to 83 (DRYERKK) are cytoplasmic. The helical transmembrane segment at 84–104 (VILLARGTCGIGFIGLCLNAL) threads the bilayer. The Periplasmic portion of the chain corresponds to 105–109 (LPEPS). A helical membrane pass occupies residues 110-130 (LLAIYLLGLWDGFFASLGVTA). The Cytoplasmic portion of the chain corresponds to 131 to 156 (LLAATPALVGRENLMQAGAITMLTVR). The helical transmembrane segment at 157 to 177 (LGSVISPMIGGLLLATGGVAW) threads the bilayer. Position 178 (Asn-178) is a topological domain, periplasmic. A helical transmembrane segment spans residues 179-199 (YGLAAAGTFITLLPLLSLPAL). Over 200-218 (PPPPQPREHPLKSLLAGFR) the chain is Cytoplasmic. A helical membrane pass occupies residues 219-239 (FLLASPLVGGIALLGGLLTMA). The Periplasmic segment spans residues 240–256 (SAVRVLYPALADNWQMS). Residues 257 to 277 (AAQIGFLYAAIPLGAAIGALT) form a helical membrane-spanning segment. At 278-287 (SGKLAHSVRP) the chain is on the cytoplasmic side. A helical membrane pass occupies residues 288–307 (GLLMLLSTLGAFLAIGLFGL). The Periplasmic segment spans residues 308 to 313 (MPMWIL). Residues 314-336 (GVVCLALFGWLSAVSSLLQYTML) form a helical membrane-spanning segment. The Cytoplasmic segment spans residues 337–356 (QTQTPEAMLGRINGLWTAQN). Residues 357–377 (VTGDAIGAALLGGLGAMMTPV) form a helical membrane-spanning segment. Ala-378 is a topological domain (periplasmic). Residues 379 to 399 (SASASGFGLLIIGVLLLLVLV) form a helical membrane-spanning segment. The Cytoplasmic portion of the chain corresponds to 400-416 (ELRRFRQTPPQVTASDS).

Belongs to the major facilitator superfamily. EntS (TC 2.A.1.38) family.

The protein localises to the cell inner membrane. Component of an export pathway for enterobactin. The sequence is that of Enterobactin exporter EntS from Escherichia coli O6:H1 (strain CFT073 / ATCC 700928 / UPEC).